Reading from the N-terminus, the 183-residue chain is UPF0397 protein EAT1b_2102 (183 aa).

The next 5 helical transmembrane spans lie at 9–29 (IVATGIGAAVFIILSRFAAIP), 42–62 (AFLAFMAVLFGPITAGLIGLI), 74–94 (SPWWSWVIVSGFVGLGIGLIA), 117–137 (AVVQAIGWIVIAPVLDILIYA), and 147–167 (GAVAATSNILTVGVIGTLLLV).

It belongs to the UPF0397 family.

The protein resides in the cell membrane. The sequence is that of UPF0397 protein EAT1b_2102 from Exiguobacterium sp. (strain ATCC BAA-1283 / AT1b).